Consider the following 286-residue polypeptide: Polyamine aminopropyltransferase (286 aa).

The 238-residue stretch at 5–242 folds into the PABS domain; sequence DNWFTEVLEE…GWWSATLASK (238 aa). Q35 lines the S-methyl-5'-thioadenosine pocket. The spermidine site is built by H66 and D90. S-methyl-5'-thioadenosine-binding positions include D110 and 141-142; that span reads DG. D160 functions as the Proton acceptor in the catalytic mechanism. 160-163 is a spermidine binding site; sequence DSTD.

Belongs to the spermidine/spermine synthase family. In terms of assembly, homodimer or homotetramer.

The protein localises to the cytoplasm. It carries out the reaction S-adenosyl 3-(methylsulfanyl)propylamine + putrescine = S-methyl-5'-thioadenosine + spermidine + H(+). Its pathway is amine and polyamine biosynthesis; spermidine biosynthesis; spermidine from putrescine: step 1/1. In terms of biological role, catalyzes the irreversible transfer of a propylamine group from the amino donor S-adenosylmethioninamine (decarboxy-AdoMet) to putrescine (1,4-diaminobutane) to yield spermidine. The chain is Polyamine aminopropyltransferase from Alkalilimnicola ehrlichii (strain ATCC BAA-1101 / DSM 17681 / MLHE-1).